The sequence spans 859 residues: Probable helicase A859L (859 aa).

Positions 178 to 349 (YQELQRSGRA…KNRELFGGVA (172 aa)) constitute a Helicase ATP-binding domain. 191–198 (MACRCGKT) contacts ATP. The DEAH box motif lies at 298 to 301 (DECH). Positions 394-553 (QIIMALAYLK…RFYEHLLNPS (160 aa)) constitute a Helicase C-terminal domain.

It belongs to the asfivirus helicase A859L family.

The polypeptide is Probable helicase A859L (African swine fever virus (isolate Pig/Kenya/KEN-50/1950) (ASFV)).